Reading from the N-terminus, the 699-residue chain is Polyribonucleotide nucleotidyltransferase (699 aa).

Positions 485 and 491 each coordinate Mg(2+). In terms of domain architecture, KH spans 552–611 (PRITTIKINPEKIRDVIGKGGAVIRALTEETGTTIELEDDGTVKIASSNGDATREAIRRI). One can recognise an S1 motif domain in the interval 621–689 (GRIYNGKVIR…RQGRVRLSIK (69 aa)).

The protein belongs to the polyribonucleotide nucleotidyltransferase family. Component of the RNA degradosome, which is a multiprotein complex involved in RNA processing and mRNA degradation. It depends on Mg(2+) as a cofactor.

The protein resides in the cytoplasm. The catalysed reaction is RNA(n+1) + phosphate = RNA(n) + a ribonucleoside 5'-diphosphate. Its function is as follows. Involved in mRNA degradation. Catalyzes the phosphorolysis of single-stranded polyribonucleotides processively in the 3'- to 5'-direction. This Shewanella sp. (strain ANA-3) protein is Polyribonucleotide nucleotidyltransferase.